A 192-amino-acid polypeptide reads, in one-letter code: Phosphoheptose isomerase (192 aa).

Positions 37–192 constitute an SIS domain; it reads IAASLRDGGK…IMLIEKELAV (156 aa). A substrate-binding site is contributed by 52 to 54; sequence NGG. The Zn(2+) site is built by His-61 and Glu-65. Residues Glu-65, 93–94, 119–121, Ser-124, and Gln-172 contribute to the substrate site; these read ND and STS. Zn(2+) contacts are provided by Gln-172 and His-180.

It belongs to the SIS family. GmhA subfamily. Homotetramer. Zn(2+) is required as a cofactor.

The protein localises to the cytoplasm. The catalysed reaction is 2 D-sedoheptulose 7-phosphate = D-glycero-alpha-D-manno-heptose 7-phosphate + D-glycero-beta-D-manno-heptose 7-phosphate. It participates in carbohydrate biosynthesis; D-glycero-D-manno-heptose 7-phosphate biosynthesis; D-glycero-alpha-D-manno-heptose 7-phosphate and D-glycero-beta-D-manno-heptose 7-phosphate from sedoheptulose 7-phosphate: step 1/1. Catalyzes the isomerization of sedoheptulose 7-phosphate in D-glycero-D-manno-heptose 7-phosphate. The polypeptide is Phosphoheptose isomerase (Tolumonas auensis (strain DSM 9187 / NBRC 110442 / TA 4)).